A 390-amino-acid chain; its full sequence is Anhydro-N-acetylmuramic acid kinase (390 aa).

9 to 16 lines the ATP pocket; that stretch reads GTSLDGID.

This sequence belongs to the anhydro-N-acetylmuramic acid kinase family.

It catalyses the reaction 1,6-anhydro-N-acetyl-beta-muramate + ATP + H2O = N-acetyl-D-muramate 6-phosphate + ADP + H(+). It participates in amino-sugar metabolism; 1,6-anhydro-N-acetylmuramate degradation. It functions in the pathway cell wall biogenesis; peptidoglycan recycling. Catalyzes the specific phosphorylation of 1,6-anhydro-N-acetylmuramic acid (anhMurNAc) with the simultaneous cleavage of the 1,6-anhydro ring, generating MurNAc-6-P. Is required for the utilization of anhMurNAc either imported from the medium or derived from its own cell wall murein, and thus plays a role in cell wall recycling. This Bacillus cereus (strain ATCC 14579 / DSM 31 / CCUG 7414 / JCM 2152 / NBRC 15305 / NCIMB 9373 / NCTC 2599 / NRRL B-3711) protein is Anhydro-N-acetylmuramic acid kinase.